The primary structure comprises 376 residues: PqqA peptide cyclase (376 aa).

One can recognise a Radical SAM core domain in the interval 4 to 219 (VPPPLSVLLE…VETARRSLGD (216 aa)). Residues Cys18, Cys22, and Cys25 each coordinate [4Fe-4S] cluster.

It belongs to the radical SAM superfamily. PqqE family. Interacts with PqqD. The interaction is necessary for activity of PqqE. [4Fe-4S] cluster serves as cofactor.

It catalyses the reaction [PQQ precursor protein] + S-adenosyl-L-methionine = E-Y cross-linked-[PQQ precursor protein] + 5'-deoxyadenosine + L-methionine + H(+). Its pathway is cofactor biosynthesis; pyrroloquinoline quinone biosynthesis. In terms of biological role, catalyzes the cross-linking of a glutamate residue and a tyrosine residue in the PqqA protein as part of the biosynthesis of pyrroloquinoline quinone (PQQ). The chain is PqqA peptide cyclase from Xanthomonas campestris pv. campestris (strain B100).